The following is a 258-amino-acid chain: MDGIIEQKSMLVHSKISDAGKRNGLINTRNLMAESRDGLVSVYPAPQYQSHRVGASTVPASLDSSRSEPVQQLLDPNTLQQSVESRYRPNIILYSEGVLRSWGDGVTTDCCETTFIEDRSPTKDSLEYPDGKFIDLSADDIKIHTLSYDVEEEEEFQELESDYSSDTESEDNFLMMPPRDHLGLSVFSMLCCFWPLGIAAFYLSHETNKAVAKGDLHQASTSSRRALFLAVLSITIGTGVYVGVAVALIAYLSKNNHL.

The Cytoplasmic portion of the chain corresponds to 1–181 (MDGIIEQKSM…NFLMMPPRDH (181 aa)). A Phosphoserine modification is found at serine 137. A helical transmembrane segment spans residues 182–202 (LGLSVFSMLCCFWPLGIAAFY). The Extracellular portion of the chain corresponds to 203–228 (LSHETNKAVAKGDLHQASTSSRRALF). An intramembrane region (helical) is located at residues 229-249 (LAVLSITIGTGVYVGVAVALI). The Extracellular portion of the chain corresponds to 250-258 (AYLSKNNHL).

This sequence belongs to the CD225/Dispanin family. As to quaternary structure, homodimer. Interacts with GRIA1 and GRIA2.

The protein resides in the cell membrane. It localises to the early endosome membrane. Its subcellular location is the postsynaptic density membrane. It is found in the synapse. The protein localises to the cell projection. The protein resides in the dendrite. It localises to the dendritic spine. May regulate AMPA receptor content at nascent synapses, and have a role in postsynaptic development and maturation. The protein is Synapse differentiation-inducing gene protein 1 (SYNDIG1) of Macaca fascicularis (Crab-eating macaque).